Reading from the N-terminus, the 586-residue chain is Maltogenic alpha-amylase (586 aa).

Ca(2+) is bound by residues Asn147, Asn152, Asp153, Gly172, and Asp174. Residues His247 and Arg326 each coordinate substrate. Asp328 functions as the Nucleophile in the catalytic mechanism. Glu357 functions as the Proton donor in the catalytic mechanism. Residues 423 to 424 (HD), Asp468, and Arg472 each bind substrate.

It belongs to the glycosyl hydrolase 13 family. The cofactor is Ca(2+).

The enzyme catalyses hydrolysis of (1-&gt;4)-alpha-D-glucosidic linkages in polysaccharides so as to remove successive alpha-maltose residues from the non-reducing ends of the chains.. In terms of biological role, converts starch into maltose. This Bacillus acidopullulyticus protein is Maltogenic alpha-amylase.